A 254-amino-acid polypeptide reads, in one-letter code: Nickel import ATP-binding protein NikD (254 aa).

One can recognise an ABC transporter domain in the interval 2 to 241; sequence PQQIELRNIA…PKHAVTRSLV (240 aa). 36-43 contacts ATP; it reads GGSGSGKS.

The protein belongs to the ABC transporter superfamily. Nickel importer (TC 3.A.1.5.3) family. As to quaternary structure, the complex is composed of two ATP-binding proteins (NikD and NikE), two transmembrane proteins (NikB and NikC) and a solute-binding protein (NikA).

It is found in the cell inner membrane. The catalysed reaction is Ni(2+)(out) + ATP + H2O = Ni(2+)(in) + ADP + phosphate + H(+). In terms of biological role, part of the ABC transporter complex NikABCDE involved in nickel import. Responsible for energy coupling to the transport system. This Escherichia coli (strain UTI89 / UPEC) protein is Nickel import ATP-binding protein NikD.